The sequence spans 322 residues: Ribokinase (322 aa).

Residues 25–27 (MTD), 53–57 (GKGAN), and Glu-154 each bind substrate. Residues Asn-199, 235–240 (TLGAEG), and Thr-256 each bind ATP. The K(+) site is built by Asp-263 and Thr-265. Residues 268 to 269 (GD) and Asn-295 contribute to the ATP site. Position 269 (Asp-269) interacts with substrate. Catalysis depends on Asp-269, which acts as the Proton acceptor. Ser-301, Ala-304, Gly-306, and Ser-310 together coordinate K(+).

It belongs to the carbohydrate kinase PfkB family. Ribokinase subfamily. As to quaternary structure, homodimer. The cofactor is Mg(2+).

The protein localises to the cytoplasm. It localises to the nucleus. It catalyses the reaction D-ribose + ATP = D-ribose 5-phosphate + ADP + H(+). It participates in carbohydrate metabolism; D-ribose degradation; D-ribose 5-phosphate from beta-D-ribopyranose: step 2/2. With respect to regulation, activated by a monovalent cation that binds near, but not in, the active site. The most likely occupant of the site in vivo is potassium. Ion binding induces a conformational change that may alter substrate affinity. Competitively inhibited by phosphonoacetic acid, etidronate, 2-carboxethylphosphonic acid, N-(phosphonomethyl)glycine, N-(phosphonomethyl)iminodiacetic acid and clodronate. Its function is as follows. Catalyzes the phosphorylation of ribose at O-5 in a reaction requiring ATP and magnesium. The resulting D-ribose-5-phosphate can then be used either for sythesis of nucleotides, histidine, and tryptophan, or as a component of the pentose phosphate pathway. The sequence is that of Ribokinase from Homo sapiens (Human).